We begin with the raw amino-acid sequence, 48 residues long: Small, acid-soluble spore protein P (48 aa).

The span at 1 to 12 (MTNKNDGKDMRK) shows a compositional bias: basic and acidic residues. The disordered stretch occupies residues 1–48 (MTNKNDGKDMRKNAPKGAQPGQPEPLSGSKKVKNRNHTRQKHNSSHDM). The span at 30–48 (KKVKNRNHTRQKHNSSHDM) shows a compositional bias: basic residues.

It belongs to the SspP family.

It is found in the spore core. The sequence is that of Small, acid-soluble spore protein P from Bacillus licheniformis (strain ATCC 14580 / DSM 13 / JCM 2505 / CCUG 7422 / NBRC 12200 / NCIMB 9375 / NCTC 10341 / NRRL NRS-1264 / Gibson 46).